Reading from the N-terminus, the 348-residue chain is Protein pelota homolog (348 aa).

This sequence belongs to the eukaryotic release factor 1 family. Pelota subfamily. Monomer. The cofactor is a divalent metal cation.

It is found in the cytoplasm. In terms of biological role, may function in recognizing stalled ribosomes, interact with stem-loop structures in stalled mRNA molecules, and effect endonucleolytic cleavage of the mRNA. May play a role in the release non-functional ribosomes and degradation of damaged mRNAs. Has endoribonuclease activity. This is Protein pelota homolog from Methanococcus aeolicus (strain ATCC BAA-1280 / DSM 17508 / OCM 812 / Nankai-3).